Consider the following 96-residue polypeptide: Citrate lyase acyl carrier protein (96 aa).

Position 14 is an O-(phosphoribosyl dephospho-coenzyme A)serine (serine 14).

It belongs to the CitD family. Oligomer with a subunit composition of (alpha,beta,gamma)6.

It is found in the cytoplasm. Its function is as follows. Covalent carrier of the coenzyme of citrate lyase. The polypeptide is Citrate lyase acyl carrier protein (Pectobacterium carotovorum subsp. carotovorum (strain PC1)).